A 244-amino-acid polypeptide reads, in one-letter code: Proteasome subunit alpha 2 (244 aa).

It belongs to the peptidase T1A family. The 20S proteasome core is composed of 14 alpha and 14 beta subunits that assemble into four stacked heptameric rings, resulting in a barrel-shaped structure. The two inner rings, each composed of seven catalytic beta subunits, are sandwiched by two outer rings, each composed of seven alpha subunits. The catalytic chamber with the active sites is on the inside of the barrel. Has a gated structure, the ends of the cylinder being occluded by the N-termini of the alpha-subunits. Is capped at one or both ends by the proteasome regulatory ATPase, PAN.

It localises to the cytoplasm. Its activity is regulated as follows. The formation of the proteasomal ATPase PAN-20S proteasome complex, via the docking of the C-termini of PAN into the intersubunit pockets in the alpha-rings, triggers opening of the gate for substrate entry. Interconversion between the open-gate and close-gate conformations leads to a dynamic regulation of the 20S proteasome proteolysis activity. Functionally, component of the proteasome core, a large protease complex with broad specificity involved in protein degradation. The chain is Proteasome subunit alpha 2 from Haloarcula marismortui (strain ATCC 43049 / DSM 3752 / JCM 8966 / VKM B-1809) (Halobacterium marismortui).